We begin with the raw amino-acid sequence, 198 residues long: uncharacterized protein (198 aa).

A coiled-coil region spans residues 20–58 (ERVRRDEELARLSADKEQAKNDLEESKRRIARLRGTVYE). Residues 144-198 (LSNRKTKNPESDRRRQSRKKKSTQIQASDEMKHRRHHVHKVHHYSQKQSSSTTRR) are disordered. A compositionally biased stretch (basic residues) spans 176–188 (HRRHHVHKVHHYS). The span at 189–198 (QKQSSSTTRR) shows a compositional bias: polar residues.

The protein localises to the nucleus. Its subcellular location is the nucleolus. This is an uncharacterized protein from Schizosaccharomyces pombe (strain 972 / ATCC 24843) (Fission yeast).